Here is a 167-residue protein sequence, read N- to C-terminus: UPF0225 protein VP1145 (167 aa).

It belongs to the UPF0225 family.

The chain is UPF0225 protein VP1145 from Vibrio parahaemolyticus serotype O3:K6 (strain RIMD 2210633).